A 115-amino-acid chain; its full sequence is Con-Ins T2 (115 aa).

Positions M1–S21 are cleaved as a signal peptide. A propeptide spanning residues S22–R29 is cleaved from the precursor. 3 disulfide bridges follow: C38–C101, C50–C114, and C100–C105. 4-carboxyglutamate is present on E48. The propeptide at K53–R94 is c peptide. A 4-carboxyglutamate modification is found at E98. The residue at position 109 (E109) is a 4-carboxyglutamate. A Cysteine amide modification is found at C114.

The protein belongs to the insulin family. Heterodimer of A and B chains; disulfide-linked. Expressed by the venom gland.

Its subcellular location is the secreted. In terms of biological role, this venom insulin facilitates prey capture by rapidly inducing hypoglycemic shock. It is one of the smallest known insulin found in nature and lacks the C-terminal segment of the B chain that, in human insulin, mediates engagement of the insulin receptor (INSR) and assembly of the hormone's hexameric storage form. Despite lacking this segment, it both binds and activates human insulin receptor (long isoform (HIR-B)) with a high potency (EC(50)=15.5 nM). In vivo, intraperitoneal injection of this peptide into zebrafish lowers blood glucose with a lower potency than human insulin. In addition, when applied to water, this peptide reduces overall locomotor activity of zebrafish larvae, observed as a significant decrease in the percentage of time spent swimming and movement frequency. When tested on a mouse model of diabetes, this insulin also lowers blood glucose with a 10-fold lower potency than human insulin. The protein is Con-Ins T2 of Conus tulipa (Fish-hunting cone snail).